The chain runs to 177 residues: Acireductone dioxygenase (177 aa).

Positions 1 to 23 (MVRAWYMDDSDADQRAPHMTDPP) are disordered. Fe(2+) contacts are provided by H86, H88, E92, and H131. 4 residues coordinate Ni(2+): H86, H88, E92, and H131.

It belongs to the acireductone dioxygenase (ARD) family. The cofactor is Fe(2+). It depends on Ni(2+) as a cofactor.

Its subcellular location is the cytoplasm. The protein localises to the nucleus. It catalyses the reaction 1,2-dihydroxy-5-(methylsulfanyl)pent-1-en-3-one + O2 = 4-methylsulfanyl-2-oxobutanoate + formate + 2 H(+). The catalysed reaction is 1,2-dihydroxy-5-(methylsulfanyl)pent-1-en-3-one + O2 = 3-(methylsulfanyl)propanoate + CO + formate + 2 H(+). It functions in the pathway amino-acid biosynthesis; L-methionine biosynthesis via salvage pathway; L-methionine from S-methyl-5-thio-alpha-D-ribose 1-phosphate: step 5/6. Functionally, catalyzes 2 different reactions between oxygen and the acireductone 1,2-dihydroxy-3-keto-5-methylthiopentene (DHK-MTPene) depending upon the metal bound in the active site. Fe-containing acireductone dioxygenase (Fe-ARD) produces formate and 2-keto-4-methylthiobutyrate (KMTB), the alpha-ketoacid precursor of methionine in the methionine recycle pathway. Ni-containing acireductone dioxygenase (Ni-ARD) produces methylthiopropionate, carbon monoxide and formate, and does not lie on the methionine recycle pathway. The sequence is that of Acireductone dioxygenase from Branchiostoma floridae (Florida lancelet).